The following is a 184-amino-acid chain: ATP synthase subunit b, chloroplastic (184 aa).

A helical transmembrane segment spans residues 27 to 49 (LATNLINLSVVLGVLIFFGKGVL).

Belongs to the ATPase B chain family. As to quaternary structure, F-type ATPases have 2 components, F(1) - the catalytic core - and F(0) - the membrane proton channel. F(1) has five subunits: alpha(3), beta(3), gamma(1), delta(1), epsilon(1). F(0) has four main subunits: a(1), b(1), b'(1) and c(10-14). The alpha and beta chains form an alternating ring which encloses part of the gamma chain. F(1) is attached to F(0) by a central stalk formed by the gamma and epsilon chains, while a peripheral stalk is formed by the delta, b and b' chains.

The protein localises to the plastid. It localises to the chloroplast thylakoid membrane. Its function is as follows. F(1)F(0) ATP synthase produces ATP from ADP in the presence of a proton or sodium gradient. F-type ATPases consist of two structural domains, F(1) containing the extramembraneous catalytic core and F(0) containing the membrane proton channel, linked together by a central stalk and a peripheral stalk. During catalysis, ATP synthesis in the catalytic domain of F(1) is coupled via a rotary mechanism of the central stalk subunits to proton translocation. In terms of biological role, component of the F(0) channel, it forms part of the peripheral stalk, linking F(1) to F(0). This Spinacia oleracea (Spinach) protein is ATP synthase subunit b, chloroplastic.